The following is a 264-amino-acid chain: Thymidylate synthase (264 aa).

Residue arginine 21 participates in dUMP binding. A (6R)-5,10-methylene-5,6,7,8-tetrahydrofolate-binding site is contributed by histidine 51. 126–127 (RR) is a dUMP binding site. Residue cysteine 146 is the Nucleophile of the active site. DUMP-binding positions include 166–169 (RSCD), asparagine 177, and 207–209 (HLY). Aspartate 169 contacts (6R)-5,10-methylene-5,6,7,8-tetrahydrofolate. Alanine 263 contributes to the (6R)-5,10-methylene-5,6,7,8-tetrahydrofolate binding site.

This sequence belongs to the thymidylate synthase family. Bacterial-type ThyA subfamily. In terms of assembly, homodimer.

Its subcellular location is the cytoplasm. It catalyses the reaction dUMP + (6R)-5,10-methylene-5,6,7,8-tetrahydrofolate = 7,8-dihydrofolate + dTMP. Its pathway is pyrimidine metabolism; dTTP biosynthesis. Its function is as follows. Catalyzes the reductive methylation of 2'-deoxyuridine-5'-monophosphate (dUMP) to 2'-deoxythymidine-5'-monophosphate (dTMP) while utilizing 5,10-methylenetetrahydrofolate (mTHF) as the methyl donor and reductant in the reaction, yielding dihydrofolate (DHF) as a by-product. This enzymatic reaction provides an intracellular de novo source of dTMP, an essential precursor for DNA biosynthesis. The protein is Thymidylate synthase of Shigella boydii serotype 4 (strain Sb227).